We begin with the raw amino-acid sequence, 207 residues long: Guanylate kinase (207 aa).

Residues 5-184 form the Guanylate kinase-like domain; it reads GNLFIVSAPS…ALADLVAIIR (180 aa). 12 to 19 contacts ATP; sequence APSGAGKS.

Belongs to the guanylate kinase family.

The protein localises to the cytoplasm. It carries out the reaction GMP + ATP = GDP + ADP. Essential for recycling GMP and indirectly, cGMP. The polypeptide is Guanylate kinase (Shewanella violacea (strain JCM 10179 / CIP 106290 / LMG 19151 / DSS12)).